A 361-amino-acid polypeptide reads, in one-letter code: Chorismate synthase (361 aa).

NADP(+)-binding residues include Arg48 and Arg54. FMN-binding positions include 125-127 (RSS), 238-239 (NA), Gly278, 293-297 (KPTSS), and Arg319.

Belongs to the chorismate synthase family. In terms of assembly, homotetramer. FMNH2 serves as cofactor.

The catalysed reaction is 5-O-(1-carboxyvinyl)-3-phosphoshikimate = chorismate + phosphate. The protein operates within metabolic intermediate biosynthesis; chorismate biosynthesis; chorismate from D-erythrose 4-phosphate and phosphoenolpyruvate: step 7/7. Catalyzes the anti-1,4-elimination of the C-3 phosphate and the C-6 proR hydrogen from 5-enolpyruvylshikimate-3-phosphate (EPSP) to yield chorismate, which is the branch point compound that serves as the starting substrate for the three terminal pathways of aromatic amino acid biosynthesis. This reaction introduces a second double bond into the aromatic ring system. In Pectobacterium carotovorum subsp. carotovorum (strain PC1), this protein is Chorismate synthase.